A 186-amino-acid chain; its full sequence is MNTIRNSICLTIITMVLCGFLFPLAITLIGQIFFYQQANGSLITYDNRIVGSKLIGQHWTETRYFHGRPSAVDYNMNPEKLYKNGVSSGGSNESNGNTELIARMKHHVKFGNSNVTIDAATSSESGLDPHITVENALKQAPRIADARHVSTSRVADLIQHRKQRGVLTNDYVNVLELNIALDKMKD.

A helical membrane pass occupies residues 10–30 (LTIITMVLCGFLFPLAITLIG).

The protein belongs to the KdpC family. The system is composed of three essential subunits: KdpA, KdpB and KdpC.

It localises to the cell membrane. In terms of biological role, part of the high-affinity ATP-driven potassium transport (or Kdp) system, which catalyzes the hydrolysis of ATP coupled with the electrogenic transport of potassium into the cytoplasm. This subunit acts as a catalytic chaperone that increases the ATP-binding affinity of the ATP-hydrolyzing subunit KdpB by the formation of a transient KdpB/KdpC/ATP ternary complex. The sequence is that of Potassium-transporting ATPase KdpC subunit from Staphylococcus aureus (strain COL).